Consider the following 461-residue polypeptide: Chromosomal replication initiator protein DnaA (461 aa).

Residues 1-87 (MAVSLWQQCI…IGSRPSAKPV (87 aa)) form a domain I, interacts with DnaA modulators region. Residues 87–124 (VVQATAAVRTSRPVTREVTKPSFNTPHAEPMANANHRS) form a domain II region. Residues 99–125 (PVTREVTKPSFNTPHAEPMANANHRSN) are disordered. The tract at residues 125-341 (NINPTYQFDN…GALNRVIANA (217 aa)) is domain III, AAA+ region. 4 residues coordinate ATP: G169, G171, K172, and T173. Residues 342 to 461 (NFTGRPITID…YANLIRTLSS (120 aa)) form a domain IV, binds dsDNA region.

It belongs to the DnaA family. Oligomerizes as a right-handed, spiral filament on DNA at oriC.

The protein resides in the cytoplasm. Its function is as follows. Plays an essential role in the initiation and regulation of chromosomal replication. ATP-DnaA binds to the origin of replication (oriC) to initiate formation of the DNA replication initiation complex once per cell cycle. Binds the DnaA box (a 9 base pair repeat at the origin) and separates the double-stranded (ds)DNA. Forms a right-handed helical filament on oriC DNA; dsDNA binds to the exterior of the filament while single-stranded (ss)DNA is stabiized in the filament's interior. The ATP-DnaA-oriC complex binds and stabilizes one strand of the AT-rich DNA unwinding element (DUE), permitting loading of DNA polymerase. After initiation quickly degrades to an ADP-DnaA complex that is not apt for DNA replication. Binds acidic phospholipids. In Shewanella pealeana (strain ATCC 700345 / ANG-SQ1), this protein is Chromosomal replication initiator protein DnaA.